The following is a 20-amino-acid chain: DELTA-actitoxin-Afr1b (20 aa).

This sequence belongs to the actinoporin family. Sea anemone subfamily. Octamer or nonamer in membranes. Monomer in the soluble state.

The protein resides in the secreted. The protein localises to the nematocyst. Its subcellular location is the target cell membrane. Functionally, pore-forming toxin (PFT) that consists of a crown-shaped octamer or nonamer that forms cation-selective hydrophilic pores of about 1.5 nm (inside) and 13 nm (outside) and causes cytolysis. It causes cardiac stimulation. Also causes hemolysis (HC(50)=0.4 nM). Interestingly, the Phe-16 is crucial for hemolysis. Pore formation is a multi-step process that involves specific recognition of membrane sphingomyelin (but neither cholesterol nor phosphatidylcholine) using aromatic rich region and adjacent phosphocholine (POC) binding site, firm binding to the membrane (mainly driven by hydrophobic interactions) accompanied by the transfer of the N-terminal region to the lipid-water interface and finally pore formation after oligomerization of monomers. It is probable that a dimeric form is an assembly intermediate before the complete oligomerization. The formation of stable pores occurs only in vesicles composed of DOPC/SM (there is no oligomerization when the PFT is treated with vesicles of DOPC or SM alone). The transmembrane pore displays 8 lateral perforations, one at each subunit-subunit interface, partially occupied by the acyl-chain region of a bridging lipid. Each pore contains 24 lipid molecules, firmly bound to each subunit, that is, 3 lipids (L1, L2, L3, L4 and/or L5) are associated to each subunit. Lipid L1 bridges 2 subunits, whereas lipids L2 and L3 bind to sites at single subunit. This chain is DELTA-actitoxin-Afr1b, found in Actinia fragacea (Strawberry anemone).